The chain runs to 476 residues: Tryptophan--tRNA ligase, cytoplasmic (476 aa).

Positions 1-117 are dispensable to the catalytic activity; that stretch reads MADMSNGEQG…LIVRFGSSKI (117 aa). The WHEP-TRS domain occupies 13-69; it reads SPLELFHSIAAQGELVRDLKARNAAKDEIDSAVKMLLSLKTSYKAATGEDYKVDCPP. The tract at residues 63–83 is disordered; sequence YKVDCPPGDPAPESGEGLDAT. An N6-succinyllysine modification is found at lysine 159. The 'HIGH' region motif lies at 169–178; that stretch reads PSSEAMHVGH. Residues 354–358 carry the 'KMSKS' region motif; that stretch reads KMSAS. At serine 356 the chain carries Phosphoserine.

Belongs to the class-I aminoacyl-tRNA synthetase family. In terms of assembly, homodimer. Interacts with oxidized form of GAPDH. Proteolytic cleavage generates 2 forms; T1-TrpRS and T2-TrpRS.

The protein localises to the cytoplasm. The catalysed reaction is tRNA(Trp) + L-tryptophan + ATP = L-tryptophyl-tRNA(Trp) + AMP + diphosphate + H(+). Functionally, T1-TrpRS has aminoacylation activity while T2-TrpRS lacks it. T1-TrpRS and T2-TrpRS possess angiostatic activity. T2-TrpRS inhibits fluid shear stress-activated responses of endothelial cells. Regulates ERK, Akt, and eNOS activation pathways that are associated with angiogenesis, cytoskeletal reorganization and shear stress-responsive gene expression. The chain is Tryptophan--tRNA ligase, cytoplasmic (WARS1) from Bos taurus (Bovine).